The following is a 365-amino-acid chain: 2-aminoethylphosphonate--pyruvate transaminase (365 aa).

Lysine 194 is modified (N6-(pyridoxal phosphate)lysine).

The protein belongs to the class-V pyridoxal-phosphate-dependent aminotransferase family. PhnW subfamily. Homodimer. Requires pyridoxal 5'-phosphate as cofactor.

The catalysed reaction is (2-aminoethyl)phosphonate + pyruvate = phosphonoacetaldehyde + L-alanine. Functionally, involved in phosphonate degradation. In Bacillus cereus (strain G9842), this protein is 2-aminoethylphosphonate--pyruvate transaminase.